Consider the following 175-residue polypeptide: MAIREIIILPDKQLRLVSRPIETVTPEIRKLADDMFETMYDAPGIGLAGIQIAQPLRIITMDLARRDEEGELTPRPRIFINPEILSASEELSTYEEGCLSIPEYYEEVERPARVRVRFTDLDGKVHEEDAEGIYATCIQHEIDHLNGVLFVDHISKLKRDRVVKKFTKAAKLAAK.

Fe cation is bound by residues Cys98 and His140. Residue Glu141 is part of the active site. His144 is a Fe cation binding site.

This sequence belongs to the polypeptide deformylase family. Fe(2+) is required as a cofactor.

The enzyme catalyses N-terminal N-formyl-L-methionyl-[peptide] + H2O = N-terminal L-methionyl-[peptide] + formate. Functionally, removes the formyl group from the N-terminal Met of newly synthesized proteins. Requires at least a dipeptide for an efficient rate of reaction. N-terminal L-methionine is a prerequisite for activity but the enzyme has broad specificity at other positions. This Nitrobacter hamburgensis (strain DSM 10229 / NCIMB 13809 / X14) protein is Peptide deformylase.